We begin with the raw amino-acid sequence, 36 residues long: Phosphoglycerate kinase, chloroplastic (36 aa).

A22, D23, and N25 together coordinate (2R)-3-phosphoglycerate.

Belongs to the phosphoglycerate kinase family. In terms of assembly, monomer. It depends on Mg(2+) as a cofactor.

It is found in the plastid. The protein resides in the chloroplast. It carries out the reaction (2R)-3-phosphoglycerate + ATP = (2R)-3-phospho-glyceroyl phosphate + ADP. Its pathway is carbohydrate biosynthesis; Calvin cycle. This chain is Phosphoglycerate kinase, chloroplastic, found in Scenedesmus fuscus (Green alga).